A 492-amino-acid chain; its full sequence is Cytochrome P450 2A2 (492 aa).

Position 437 (Cys437) interacts with heme.

It belongs to the cytochrome P450 family. The cofactor is heme. In terms of tissue distribution, liver specific.

Its subcellular location is the endoplasmic reticulum membrane. It localises to the microsome membrane. It catalyses the reaction an organic molecule + reduced [NADPH--hemoprotein reductase] + O2 = an alcohol + oxidized [NADPH--hemoprotein reductase] + H2O + H(+). Its function is as follows. Highly active in the 15-alpha-hydroxylation of testosterone. This is Cytochrome P450 2A2 (Cyp2a2) from Rattus norvegicus (Rat).